We begin with the raw amino-acid sequence, 701 residues long: MNPVTKQFQFGQSTVTLETGRIARQATGAVLVTMDDVSVLVTVVGAKSPAEGRDFFPLSVHYQEKTYAAGRIPGGFFKREGRPSEKETLTSRLIDRPIRPLFPEGFMNEVQVVCTVVSTNKKSDPDIAAMIGTSAALAISGIPFAGPIGAARVGFHPEIGYILNPTYEQLQSSSLDMVVAGTEDAVLMVESEADELTEDQMLGAVLFAHDEFQAVIRAVKELAAEAGKPAWDWKAPAENTVLVNAIKAELGEAISQAYTITIKQDRYNRLGELRDQAVALFAGEEEGKFPASEVKDVFGLLEYRTVRENIVNGKPRIDGRDTRTVRPLRIEVGVLGKTHGSALFTRGETQALVVATLGTARDAQLLDTLEGERKDAFMLHYNFPPFSVGECGRMGSPGRREIGHGRLARRGVAAMLPTQDEFPYTIRVVSEITESNGSSSMASVCGASLALMDAGVPVKAPVAGIAMGLVKEGEKFAVLTDILGDEDHLGDMDFKVAGTDKGVTALQMDIKINGITEEIMEIALGQALEARLNILGQMNQVIARPRAELSENAPTMLQMKIDSDKIRDVIGKGGATIRAICEETKASIDIEDDGSVKIYGETKEAAEAAKQRVLAITAEAEIGKIYVGKVERIVDFGAFVNILPGKDGLVHISQISDKRIDKVTDVLQEGQEVKVLVLDVDNRGRIKLSIKDVAAAEASGV.

Mg(2+) contacts are provided by D487 and D493. The KH domain maps to 554 to 613 (PTMLQMKIDSDKIRDVIGKGGATIRAICEETKASIDIEDDGSVKIYGETKEAAEAAKQRV). Residues 623–691 (GKIYVGKVER…NRGRIKLSIK (69 aa)) enclose the S1 motif domain.

This sequence belongs to the polyribonucleotide nucleotidyltransferase family. As to quaternary structure, component of the RNA degradosome, which is a multiprotein complex involved in RNA processing and mRNA degradation. Mg(2+) serves as cofactor.

The protein localises to the cytoplasm. It carries out the reaction RNA(n+1) + phosphate = RNA(n) + a ribonucleoside 5'-diphosphate. Its function is as follows. Involved in mRNA degradation. Catalyzes the phosphorolysis of single-stranded polyribonucleotides processively in the 3'- to 5'-direction. In Pseudomonas paraeruginosa (strain DSM 24068 / PA7) (Pseudomonas aeruginosa (strain PA7)), this protein is Polyribonucleotide nucleotidyltransferase.